The following is a 35-amino-acid chain: Surfactant protein C (35 aa).

Residues C5 and C6 are each lipidated (S-palmitoyl cysteine).

The protein resides in the secreted. It localises to the extracellular space. It is found in the surface film. Pulmonary surfactant associated proteins promote alveolar stability by lowering the surface tension at the air-liquid interface in the peripheral air spaces. The polypeptide is Surfactant protein C (SFTPC) (Sus scrofa (Pig)).